The sequence spans 235 residues: Ribosomal RNA large subunit methyltransferase E (235 aa).

The S-adenosyl-L-methionine site is built by G76, W78, D99, D115, and D139. K179 serves as the catalytic Proton acceptor.

This sequence belongs to the class I-like SAM-binding methyltransferase superfamily. RNA methyltransferase RlmE family.

It is found in the cytoplasm. The catalysed reaction is uridine(2552) in 23S rRNA + S-adenosyl-L-methionine = 2'-O-methyluridine(2552) in 23S rRNA + S-adenosyl-L-homocysteine + H(+). Functionally, specifically methylates the uridine in position 2552 of 23S rRNA at the 2'-O position of the ribose in the fully assembled 50S ribosomal subunit. The protein is Ribosomal RNA large subunit methyltransferase E of Rhodopseudomonas palustris (strain BisA53).